A 2138-amino-acid chain; its full sequence is MSGRRCDRRLNVQKVSAADELETKLGFGLFSQGETRLGWLLTFASSSWEDADTGKTFSCVDLFFVTQDGSSFKTKYKFRPYLYAATKDNMELEVEAYLRRRYERQVADIQIVHKEDLYLKNHLSGLQKKYLKVSFDTVQQLVEVKRDLLHIVERNLAKFNALEAYESILSGKREQRPQDCLDSVVDLREYDVPYHVRFAIDNDVRSGQWYNVSISSTDVILEKRTDLLQRAEVRVCAFDIETVKLPLKFPDAEYDQIMMISYMVDGQGFLITNRECVGKDIEDLEYTPKPEFEGYFKVTNVTNEVELLRKWFSHMQELKPGIYVTYNGDFFDWPFIERRASHHGIKMNEELGFRCDQNQGECRAKFVCHLDCFSWVKRDSYLPQGSQGLKAVTKVKLGYDPLEVNPEDMVRFAMEKPQTMASYSVSDAVATYYLYMTYVHPFVFSLATIIPMVPDEVLRKGSGTLCEMLLMVEAYKANVVCPNKNQADPEKFYQGKLLESETYIGGHVECLQSGVFRSDIPTSFKLDASAYQQLIDNLGRDLEYAITVEGKMRMDSVSNFDEVKEVIREKLEKLRDDPIREEGPLIYHLDVAAMYPNIILTNRLQPPSIVTDEVCTACDFNGPEKTCLRKLEWVWRGVTFKGNKSEYYHLKKQIESESVDAGANMQSSKPFLDLPKVEQQSKLKERLKKYCQKAYSRVLDKPITEVREAGICMRENPFYVDTVRSFRDRRYEYKTLNKVWKGKLSEAKASGNLIKIQEAHDMVVVYDSLQLAHKCILNSFYGYVMRKGARWYSMEMAGVVTYTGAKIIQNARLLIERIGKPLELDTDGIWCALPGSFPENFTFKTIDMKKFTISYPCVILNVDVAKNNSNDQYQTLVDPVRKTYNSRSECSIEFEVDGPYKAMIIPASKEEGILIKKRYAVFNHDGTIAELKGFEMKRRGELKLIKVFQAELFDKFLHGSTLEECYSAVAAVANRWLDLLEGQGKDIADSELLDYISESSTMSKSLADYGQQKSCAVTTAKRLADFLGDTMVKDKGLRCQYIVAREPEGTPVSERAVPVAIFQTDDPEKKFYLQKWCKISSYTGIRSIIDWMYYKQRLHSAIQKVITIPAAMQKVANPVLRVRHPYWLEKKVCDKFRQGKIVDMFSSANKDHSTTQDNVVADIEEFCKENRPSVKGPKPVARSFEVDRNHSEGKQQESWDPEFHDISLQNVDKNVDYQGWLELEKRKWKMTLTNKKKRRYSSSLFGFDLEQNINKKVCKGRVGVGSYFRRPEEALTSSYLQIIQLVQSPQSGQFFAWVVVEGLMLKIPLTIPRVFYINSKASIAGNFTGKCINKILPHGKPCYNLMEVNIQEDQFIKESKKLAALLADPEIEGIYETKMPLEFSAICQIGCVCKIEDTAKHRNTQDGWKLGELHRITTTECRYLENSIPLVYLYHSTSTGRAVYVLYCHASKLMSVVVVNPYGDKELLSSALERQFRDRCQELSPEPFSWDGILFQVEYVDHPEAATKFLQKALCEYREENCGATVAVIECPDFNTTKEGVKALEDFPCVRIPFNDDDNSYQPVSWQRPAAKIAVLRCASAIQWLDRRIAQSRYAHVPLGNFGRDWLTFTVDIFLSRALRDQQQVLWVSDNGVPDLGDINNEETFLADETSLLFPGAYRKVSVELKVHRLAVNALLKSDLVSEMEGGGFLGVNSRGSSLNDNGSFDENNGCAQAFRVLKQLIKRLLHDACNSGNIYADSILQHLSWWLRSPSSKLHDPALHLMLHKVMQKVFALLLTDLRRLGAIIIYADFSKVIIDTGKFDLSAAKTYCESLLTVMGSRDIFKLILLEPVHYWHSLLFMDQHNYAGIRATGDEISGNEVTIEPKWSVARHLPEYIQKDFIIIVATFIFGPWKFALEKKRGSAESLEAEMVEYLKEQIGTRFISMIVEKIGNIRSHIKDINVSDASWASGQAPKGDYTFEFIQIITAVLALDQNVQQDVLVMRKILLKYIKVKECAAEAEFIDPGPSFILPNVACSNCGAYRDLDFCRDSALLTEKEWSCADPQCVKIYDKEQIESSIIQMVRQRERMYQLQDLVCNRCNQVKAAHLTEQCECSGSFRCKESGSDFHKRIEIFLDIAKRQKFRLLEECISWILFATSC.

The Nuclear localization signal 1 signature appears at 1224–1231; the sequence is EKRKWKMT. Zn(2+) contacts are provided by C2015, C2018, C2040, and C2045. The CysA-type zinc finger occupies 2015-2045; it reads CSNCGAYRDLDFCRDSALLTEKEWSCADPQC. The [4Fe-4S] cluster site is built by C2076, C2079, C2091, and C2093. The CysB motif signature appears at 2076–2093; the sequence is CNRCNQVKAAHLTEQCEC. The short motif at 2107–2114 is the Nuclear localization signal 2 element; that stretch reads HKRIEIFL.

It belongs to the DNA polymerase type-B family. Heterotetramer. [4Fe-4S] cluster serves as cofactor. As to expression, mostly expressed at low levels in inflorescence (floral meristem and flowers until anthesis), and, to a lower extent, in seeds.

The protein localises to the nucleus. It carries out the reaction DNA(n) + a 2'-deoxyribonucleoside 5'-triphosphate = DNA(n+1) + diphosphate. Functionally, DNA polymerase II, which participates in chromosomal DNA replication. Involved in the determination of cell fate during plant embryogenesis. Contributes to the flowering time repression. The protein is DNA polymerase epsilon catalytic subunit B (POL2B) of Arabidopsis thaliana (Mouse-ear cress).